The chain runs to 176 residues: Large ribosomal subunit protein uL16 (176 aa).

This sequence belongs to the universal ribosomal protein uL16 family.

The chain is Large ribosomal subunit protein uL16 from Thermoplasma acidophilum (strain ATCC 25905 / DSM 1728 / JCM 9062 / NBRC 15155 / AMRC-C165).